A 302-amino-acid chain; its full sequence is Pseudouridine-5'-phosphate glycosidase (302 aa).

Glutamate 25 acts as the Proton donor in catalysis. Substrate-binding residues include lysine 86 and valine 106. Aspartate 138 provides a ligand contact to Mn(2+). 140-142 is a binding site for substrate; sequence SAD. The Nucleophile role is filled by lysine 159.

This sequence belongs to the pseudouridine-5'-phosphate glycosidase family. Homotrimer. Mn(2+) is required as a cofactor.

It catalyses the reaction D-ribose 5-phosphate + uracil = psi-UMP + H2O. In terms of biological role, catalyzes the reversible cleavage of pseudouridine 5'-phosphate (PsiMP) to ribose 5-phosphate and uracil. Functions biologically in the cleavage direction, as part of a pseudouridine degradation pathway. The sequence is that of Pseudouridine-5'-phosphate glycosidase from Jannaschia sp. (strain CCS1).